Reading from the N-terminus, the 372-residue chain is Probable arabinan endo-1,5-alpha-L-arabinosidase B (372 aa).

The first 16 residues, 1-16, serve as a signal peptide directing secretion; the sequence is MTVLVALFCLVTWTLC. Residues 23–34 show a composition bias toward low complexity; sequence STQGTQQPQQPE. Residues 23 to 52 are disordered; it reads STQGTQQPQQPEKTPHPHPQPEDAFPPTHA. The Proton acceptor role is filled by aspartate 59. Asparagine 120 is a glycosylation site (N-linked (GlcNAc...) asparagine). The active-site Proton donor is glutamate 252. Residue asparagine 363 is glycosylated (N-linked (GlcNAc...) asparagine).

The protein belongs to the glycosyl hydrolase 43 family.

Its subcellular location is the secreted. The catalysed reaction is Endohydrolysis of (1-&gt;5)-alpha-arabinofuranosidic linkages in (1-&gt;5)-arabinans.. The protein operates within glycan metabolism; L-arabinan degradation. Functionally, endo-1,5-alpha-L-arabinanase involved in degradation of pectin. Its preferred substrate is linear 1,5-alpha-L-arabinan. This is Probable arabinan endo-1,5-alpha-L-arabinosidase B (abnB) from Aspergillus fumigatus (strain ATCC MYA-4609 / CBS 101355 / FGSC A1100 / Af293) (Neosartorya fumigata).